The chain runs to 211 residues: Ferritin heavy chain (211 aa).

An N-terminal signal peptide occupies residues 1-20 (MNSILLVFAGILAVCLPASA). The 157-residue stretch at 35-191 (ITMHRSCRNS…GKASTLKKLM (157 aa)) folds into the Ferritin-like diiron domain. Cysteine 41 and cysteine 150 are joined by a disulfide. Residues glutamate 52, glutamate 87, histidine 90, glutamate 136, and glutamine 173 each contribute to the Fe cation site.

The protein belongs to the ferritin family. In terms of assembly, oligomer of 12 light (L) chains and 12 heavy (H) chains; L and H chains are disulfide-linked. The functional molecule forms a roughly spherical shell with a diameter of 12 nm and contains a central cavity into which the insoluble ferric iron core is deposited.

The protein localises to the golgi apparatus. Its subcellular location is the secreted. The catalysed reaction is 4 Fe(2+) + O2 + 4 H(+) = 4 Fe(3+) + 2 H2O. Stores iron in a soluble, non-toxic, readily available form. Important for iron homeostasis. Iron is taken up in the ferrous form and deposited as ferric hydroxides after oxidation. Ferritin is composed of a heavy (H) chain which is responsible for the oxidation and uptake of ferrous iron, and a light (L) chain which facilitates the nucleation of the ferrihydrite iron core. The chain is Ferritin heavy chain from Trichoplusia ni (Cabbage looper).